A 1101-amino-acid chain; its full sequence is Coiled-coil domain-containing protein 150 (1101 aa).

Coiled coils occupy residues 106-299, 398-680, 712-940, and 970-1033; these read RLES…DLTS, AAHA…KEDN, DSEI…NYEQ, and VRNK…EAHR. The segment covering 1055–1071 has biased composition (basic and acidic residues); sequence SGEDRWQEKDQDVKHDV. A disordered region spans residues 1055–1101; the sequence is SGEDRWQEKDQDVKHDVMSNQSVLHRWERKQNLRPMPKKYHSEVQRK.

This chain is Coiled-coil domain-containing protein 150 (CCDC150), found in Homo sapiens (Human).